A 284-amino-acid chain; its full sequence is Pantothenate synthetase (284 aa).

30–37 (MGALHEGH) lines the ATP pocket. Catalysis depends on His37, which acts as the Proton donor. Gln61 serves as a coordination point for (R)-pantoate. Residue Gln61 participates in beta-alanine binding. Residue 147–150 (GEKD) coordinates ATP. Residue Gln153 participates in (R)-pantoate binding. Residues Val176 and 184–187 (TSSR) each bind ATP.

It belongs to the pantothenate synthetase family. As to quaternary structure, homodimer.

Its subcellular location is the cytoplasm. It catalyses the reaction (R)-pantoate + beta-alanine + ATP = (R)-pantothenate + AMP + diphosphate + H(+). It participates in cofactor biosynthesis; (R)-pantothenate biosynthesis; (R)-pantothenate from (R)-pantoate and beta-alanine: step 1/1. Its function is as follows. Catalyzes the condensation of pantoate with beta-alanine in an ATP-dependent reaction via a pantoyl-adenylate intermediate. This is Pantothenate synthetase from Chlorobaculum tepidum (strain ATCC 49652 / DSM 12025 / NBRC 103806 / TLS) (Chlorobium tepidum).